The primary structure comprises 987 residues: Transposase for transposon Tn4430 (987 aa).

The protein belongs to the transposase 7 family.

In terms of biological role, required for transposition of transposon Tn4430. The sequence is that of Transposase for transposon Tn4430 (tnpA) from Bacillus thuringiensis.